A 277-amino-acid polypeptide reads, in one-letter code: Putative pyruvate, phosphate dikinase regulatory protein (277 aa).

156–163 (GVSRTSKT) serves as a coordination point for ADP.

The protein belongs to the pyruvate, phosphate/water dikinase regulatory protein family. PDRP subfamily.

The catalysed reaction is N(tele)-phospho-L-histidyl/L-threonyl-[pyruvate, phosphate dikinase] + ADP = N(tele)-phospho-L-histidyl/O-phospho-L-threonyl-[pyruvate, phosphate dikinase] + AMP + H(+). It catalyses the reaction N(tele)-phospho-L-histidyl/O-phospho-L-threonyl-[pyruvate, phosphate dikinase] + phosphate + H(+) = N(tele)-phospho-L-histidyl/L-threonyl-[pyruvate, phosphate dikinase] + diphosphate. Its function is as follows. Bifunctional serine/threonine kinase and phosphorylase involved in the regulation of the pyruvate, phosphate dikinase (PPDK) by catalyzing its phosphorylation/dephosphorylation. The protein is Putative pyruvate, phosphate dikinase regulatory protein of Carboxydothermus hydrogenoformans (strain ATCC BAA-161 / DSM 6008 / Z-2901).